Reading from the N-terminus, the 974-residue chain is Kinase-interacting protein 1 (974 aa).

An NAB domain is found at 10 to 90 (YSWWAASHIR…ERYDHLSKEL (81 aa)). Residues 151–170 (STASKQKQGKQSSKIEDAAK) form a disordered region. The stretch at 173-423 (LSKNEAIEEI…DVVNQNSCLR (251 aa)) forms a coiled coil. The tract at residues 586–614 (AQPTPAEKGDEKVSAQSGNTSVYETHTQK) is disordered. Polar residues predominate over residues 599–610 (SAQSGNTSVYET). A coiled-coil region spans residues 641–697 (NEYTAILKNYKEVTKKLSDIEKKDRDTEFELTLQTRELKSAIAKRDEEIHNLRQKLS). Positions 714 to 740 (LLDPSDPSSARGLKPEDLPQIKDGDDE) are disordered. A compositionally biased stretch (basic and acidic residues) spans 726–736 (LKPEDLPQIKD). Coiled-coil stretches lie at residues 784–807 (HQIQ…RDKE) and 882–905 (AAKF…ELEA).

Homodimer or homooligomer. Interacts with PRK1. Post-translationally, phosphorylated by PRK1. As to expression, expressed in mature pollen grains and pollen tubes, but not in style, ovary, petal, leaf, root or sepal.

The protein resides in the cytoplasm. Its function is as follows. Probably involved in the receptor-like kinase-mediated signal transduction pathway. The polypeptide is Kinase-interacting protein 1 (Petunia integrifolia (Violet-flowered petunia)).